A 341-amino-acid polypeptide reads, in one-letter code: NADH-ubiquinone oxidoreductase chain 2 (341 aa).

Transmembrane regions (helical) follow at residues Ile-8–Gly-28, Phe-61–Phe-81, Leu-95–Val-117, Leu-145–Gly-165, Leu-195–Phe-215, Phe-238–Pro-258, Leu-266–Leu-286, and Ile-320–Ile-340.

Belongs to the complex I subunit 2 family.

Its subcellular location is the mitochondrion inner membrane. The enzyme catalyses a ubiquinone + NADH + 5 H(+)(in) = a ubiquinol + NAD(+) + 4 H(+)(out). Functionally, core subunit of the mitochondrial membrane respiratory chain NADH dehydrogenase (Complex I) that is believed to belong to the minimal assembly required for catalysis. Complex I functions in the transfer of electrons from NADH to the respiratory chain. The immediate electron acceptor for the enzyme is believed to be ubiquinone. The sequence is that of NADH-ubiquinone oxidoreductase chain 2 from Aedes aegypti (Yellowfever mosquito).